The sequence spans 578 residues: 65-kDa microtubule-associated protein 2 (578 aa).

Coiled coils occupy residues 64–84 (AELL…TTAL), 151–184 (DETD…VLEF), 235–257 (TLKE…LTDL), 290–312 (ALAL…LKSS), and 461–489 (AMLD…QQEQ). Positions 473–494 (REDEKRRLKEQKKQQEQPHTDQ) are enriched in basic and acidic residues. The tract at residues 473–578 (REDEKRRLKE…SRADPVMASP (106 aa)) is disordered. A phosphoserine mark is found at S503 and S532. Residues 549–558 (KIASPSNIVA) are compositionally biased toward polar residues. 3 positions are modified to phosphoserine: S566, S569, and S577.

Belongs to the MAP65/ASE1 family. In terms of assembly, forms a dimer. Binds to microtubules (MT). Bundles polymerized MT via the formation of 25-nm crossbridges with centrally located endocytic MT.

Its subcellular location is the nucleus. The protein localises to the cytoplasm. The protein resides in the cytoskeleton. It is found in the spindle pole. It localises to the phragmoplast. In terms of biological role, microtubule-associated protein that stabilize microtubules (MT). Involved in the regulation of MT organization and dynamics. Confers MT resistance to the drug propyzamide and cold conditions. The polypeptide is 65-kDa microtubule-associated protein 2 (MAP65-2) (Arabidopsis thaliana (Mouse-ear cress)).